A 565-amino-acid chain; its full sequence is NAD-dependent malic enzyme (565 aa).

Tyr104 serves as the catalytic Proton donor. An NAD(+)-binding site is contributed by Arg157. The active-site Proton acceptor is Lys175. Residues Glu246, Asp247, and Asp270 each coordinate a divalent metal cation. Asp270 and Asn418 together coordinate NAD(+).

This sequence belongs to the malic enzymes family. As to quaternary structure, homotetramer. It depends on Mg(2+) as a cofactor. The cofactor is Mn(2+).

The catalysed reaction is (S)-malate + NAD(+) = pyruvate + CO2 + NADH. It catalyses the reaction oxaloacetate + H(+) = pyruvate + CO2. The chain is NAD-dependent malic enzyme from Enterobacter sp. (strain 638).